We begin with the raw amino-acid sequence, 232 residues long: Octanoyltransferase (232 aa).

The 189-residue stretch at 43-231 (LPTSNYLLFV…HLTHLFEAEI (189 aa)) folds into the BPL/LPL catalytic domain. Residues 88–95 (RGGDITYH), 160–162 (AMG), and 173–175 (GFA) contribute to the substrate site. Cys-191 (acyl-thioester intermediate) is an active-site residue.

Belongs to the LipB family.

The protein resides in the cytoplasm. It catalyses the reaction octanoyl-[ACP] + L-lysyl-[protein] = N(6)-octanoyl-L-lysyl-[protein] + holo-[ACP] + H(+). It participates in protein modification; protein lipoylation via endogenous pathway; protein N(6)-(lipoyl)lysine from octanoyl-[acyl-carrier-protein]: step 1/2. In terms of biological role, catalyzes the transfer of endogenously produced octanoic acid from octanoyl-acyl-carrier-protein onto the lipoyl domains of lipoate-dependent enzymes. Lipoyl-ACP can also act as a substrate although octanoyl-ACP is likely to be the physiological substrate. The sequence is that of Octanoyltransferase from Flavobacterium johnsoniae (strain ATCC 17061 / DSM 2064 / JCM 8514 / BCRC 14874 / CCUG 350202 / NBRC 14942 / NCIMB 11054 / UW101) (Cytophaga johnsonae).